We begin with the raw amino-acid sequence, 444 residues long: Aspartate--tRNA(Asp/Asn) ligase (444 aa).

Glu176 contacts L-aspartate. The interval 198-201 (QLFK) is aspartate. Residue Arg220 participates in L-aspartate binding. ATP-binding positions include 220–222 (RAE), 228–230 (RHL), and Glu367. The Mg(2+) site is built by Glu367 and Ser370. L-aspartate contacts are provided by Ser370 and Arg374. 415–418 (GCER) serves as a coordination point for ATP.

Belongs to the class-II aminoacyl-tRNA synthetase family. Type 2 subfamily. In terms of assembly, homodimer. It depends on Mg(2+) as a cofactor.

It is found in the cytoplasm. It catalyses the reaction tRNA(Asx) + L-aspartate + ATP = L-aspartyl-tRNA(Asx) + AMP + diphosphate. Functionally, aspartyl-tRNA synthetase with relaxed tRNA specificity since it is able to aspartylate not only its cognate tRNA(Asp) but also tRNA(Asn). Reaction proceeds in two steps: L-aspartate is first activated by ATP to form Asp-AMP and then transferred to the acceptor end of tRNA(Asp/Asn). The sequence is that of Aspartate--tRNA(Asp/Asn) ligase from Methanosarcina acetivorans (strain ATCC 35395 / DSM 2834 / JCM 12185 / C2A).